Reading from the N-terminus, the 230-residue chain is Nicotinamide riboside kinase (230 aa).

12 to 20 (GASCSGKST) provides a ligand contact to ATP. Mg(2+) contacts are provided by Ser-19 and Asp-38. Asp-38 (proton acceptor) is an active-site residue. Substrate contacts are provided by residues 38–41 (DDFY) and 56–57 (WD). Arg-153 is a binding site for ATP. Substrate is bound by residues Arg-154 and 159–160 (GY). ATP is bound by residues 157-159 (RTG) and 203-205 (RIQ).

The protein belongs to the uridine kinase family. NRK subfamily.

It carries out the reaction beta-nicotinamide D-riboside + ATP = beta-nicotinamide D-ribonucleotide + ADP + H(+). The enzyme catalyses beta-D-ribosylnicotinate + ATP = nicotinate beta-D-ribonucleotide + ADP + H(+). Its pathway is cofactor biosynthesis; NAD(+) biosynthesis. In terms of biological role, catalyzes the phosphorylation of nicotinamide riboside (NR) and nicotinic acid riboside (NaR) to form nicotinamide mononucleotide (NMN) and nicotinic acid mononucleotide (NaMN). This is Nicotinamide riboside kinase (nrk1) from Schizosaccharomyces pombe (strain 972 / ATCC 24843) (Fission yeast).